The sequence spans 466 residues: Histidine--tRNA ligase (466 aa).

This sequence belongs to the class-II aminoacyl-tRNA synthetase family. Homodimer.

The protein resides in the cytoplasm. The enzyme catalyses tRNA(His) + L-histidine + ATP = L-histidyl-tRNA(His) + AMP + diphosphate + H(+). This Bifidobacterium animalis subsp. lactis (strain AD011) protein is Histidine--tRNA ligase.